A 74-amino-acid chain; its full sequence is Acyl carrier protein (74 aa).

One can recognise a Carrier domain in the interval Met-1–Thr-73. At Ser-35 the chain carries O-(pantetheine 4'-phosphoryl)serine.

This sequence belongs to the acyl carrier protein (ACP) family. In terms of processing, 4'-phosphopantetheine is transferred from CoA to a specific serine of apo-ACP by AcpS. This modification is essential for activity because fatty acids are bound in thioester linkage to the sulfhydryl of the prosthetic group.

It is found in the cytoplasm. The protein operates within lipid metabolism; fatty acid biosynthesis. Functionally, carrier of the growing fatty acid chain in fatty acid biosynthesis. This Streptococcus thermophilus (strain CNRZ 1066) protein is Acyl carrier protein.